The sequence spans 105 residues: uncharacterized protein (105 aa).

The interval 80–105 (TGGPTSSTCTRRSDLATGRGSDRRPD) is disordered.

This is an uncharacterized protein from Micromonospora rosea.